Reading from the N-terminus, the 249-residue chain is Proteasome subunit alpha (249 aa).

The disordered stretch occupies residues 229–249 (EAREAEEAAEAQSSEDGGATD).

It belongs to the peptidase T1A family. In terms of assembly, the 20S proteasome core is composed of 14 alpha and 14 beta subunits that assemble into four stacked heptameric rings, resulting in a barrel-shaped structure. The two inner rings, each composed of seven catalytic beta subunits, are sandwiched by two outer rings, each composed of seven alpha subunits. The catalytic chamber with the active sites is on the inside of the barrel. Has a gated structure, the ends of the cylinder being occluded by the N-termini of the alpha-subunits. Is capped by the proteasome-associated ATPase, ARC.

It is found in the cytoplasm. The protein operates within protein degradation; proteasomal Pup-dependent pathway. With respect to regulation, the formation of the proteasomal ATPase ARC-20S proteasome complex, likely via the docking of the C-termini of ARC into the intersubunit pockets in the alpha-rings, may trigger opening of the gate for substrate entry. Interconversion between the open-gate and close-gate conformations leads to a dynamic regulation of the 20S proteasome proteolysis activity. In terms of biological role, component of the proteasome core, a large protease complex with broad specificity involved in protein degradation. This chain is Proteasome subunit alpha, found in Thermobifida fusca (strain YX).